The primary structure comprises 410 residues: Tryptophan synthase beta chain (410 aa).

Lys100 bears the N6-(pyridoxal phosphate)lysine mark.

The protein belongs to the TrpB family. In terms of assembly, tetramer of two alpha and two beta chains. Pyridoxal 5'-phosphate serves as cofactor.

It catalyses the reaction (1S,2R)-1-C-(indol-3-yl)glycerol 3-phosphate + L-serine = D-glyceraldehyde 3-phosphate + L-tryptophan + H2O. The protein operates within amino-acid biosynthesis; L-tryptophan biosynthesis; L-tryptophan from chorismate: step 5/5. In terms of biological role, the beta subunit is responsible for the synthesis of L-tryptophan from indole and L-serine. The chain is Tryptophan synthase beta chain from Pyrobaculum aerophilum (strain ATCC 51768 / DSM 7523 / JCM 9630 / CIP 104966 / NBRC 100827 / IM2).